We begin with the raw amino-acid sequence, 436 residues long: D-amino acid dehydrogenase (436 aa).

FAD is bound at residue 3–17 (IVVLGAGVVGVTSAY).

This sequence belongs to the DadA oxidoreductase family. FAD serves as cofactor.

The catalysed reaction is a D-alpha-amino acid + A + H2O = a 2-oxocarboxylate + AH2 + NH4(+). Its pathway is amino-acid degradation; D-alanine degradation; NH(3) and pyruvate from D-alanine: step 1/1. In terms of biological role, oxidative deamination of D-amino acids. In Cereibacter sphaeroides (strain ATCC 17029 / ATH 2.4.9) (Rhodobacter sphaeroides), this protein is D-amino acid dehydrogenase.